The chain runs to 312 residues: tRNA uridine(34) hydroxylase (312 aa).

One can recognise a Rhodanese domain in the interval 123–216 (DRDDVVVLDV…YGIEQGGEDF (94 aa)). Cysteine 176 functions as the Cysteine persulfide intermediate in the catalytic mechanism.

It belongs to the TrhO family.

It catalyses the reaction uridine(34) in tRNA + AH2 + O2 = 5-hydroxyuridine(34) in tRNA + A + H2O. Its function is as follows. Catalyzes oxygen-dependent 5-hydroxyuridine (ho5U) modification at position 34 in tRNAs. The polypeptide is tRNA uridine(34) hydroxylase (Cytophaga hutchinsonii (strain ATCC 33406 / DSM 1761 / CIP 103989 / NBRC 15051 / NCIMB 9469 / D465)).